We begin with the raw amino-acid sequence, 176 residues long: Prepronociceptin (176 aa).

An N-terminal signal peptide occupies residues 1 to 19; it reads MKVLLCDLLLLSLFSSVFS. 2 consecutive propeptides follow at residues 20 to 95 and 169 to 176; these read SCQR…MQHL and TLHQNGNV.

Belongs to the opioid neuropeptide precursor family. In terms of processing, specific enzymatic cleavages at paired basic residues probably yield other active peptides besides nociceptin. Post-translationally, the N-terminal domain contains 6 conserved cysteines thought to be involved in disulfide bonding and/or processing. In terms of tissue distribution, predominantly expressed in the brain and spinal cord. Also expressed and secreted by peripheral blood neutrophils following degranulation.

It localises to the secreted. In terms of biological role, ligand of the opioid receptor-like receptor OPRL1. It may act as a transmitter in the brain by modulating nociceptive and locomotor behavior. May be involved in neuronal differentiation and development. Functionally, blocks nociceptin action in pain transmission by inhibiting nociceptin-induced hyperalgesia and allodynia. Has potent analgesic activity. The polypeptide is Prepronociceptin (PNOC) (Homo sapiens (Human)).